A 498-amino-acid polypeptide reads, in one-letter code: NADH-quinone oxidoreductase subunit N (498 aa).

14 helical membrane-spanning segments follow: residues 10–30 (LMPL…MLLI), 44–64 (VVGL…GKFV), 68–88 (VMGM…ILVA), 109–129 (ELYL…ASSH), 130–150 (YASF…LLAY), 164–184 (YLVL…YIYA), 207–227 (VLLG…LAPF), 239–259 (PAPM…GLFV), 273–293 (LVTV…LLAV), 301–321 (ILGY…ISMT), 328–348 (VTVY…AVAL), 377–397 (ATLT…GFIG), 412–434 (FLAA…VMVV), and 458–478 (LMVL…DPMI).

The protein belongs to the complex I subunit 2 family. NDH-1 is composed of 14 different subunits. Subunits NuoA, H, J, K, L, M, N constitute the membrane sector of the complex.

Its subcellular location is the cell inner membrane. It catalyses the reaction a quinone + NADH + 5 H(+)(in) = a quinol + NAD(+) + 4 H(+)(out). In terms of biological role, NDH-1 shuttles electrons from NADH, via FMN and iron-sulfur (Fe-S) centers, to quinones in the respiratory chain. The immediate electron acceptor for the enzyme in this species is believed to be ubiquinone. Couples the redox reaction to proton translocation (for every two electrons transferred, four hydrogen ions are translocated across the cytoplasmic membrane), and thus conserves the redox energy in a proton gradient. This chain is NADH-quinone oxidoreductase subunit N, found in Acinetobacter baumannii (strain AB0057).